Consider the following 270-residue polypeptide: Undecaprenyl-diphosphatase 1 (270 aa).

Transmembrane regions (helical) follow at residues 5 to 25 (YYIL…PIPI), 42 to 62 (IEGF…VLLI), 89 to 109 (FFFI…GVLF), 117 to 137 (LKGV…LWII), 192 to 212 (FSFL…ITDI), 220 to 240 (TLFV…YISL), and 250 to 270 (GNLK…LIFL).

This sequence belongs to the UppP family.

Its subcellular location is the cell membrane. It carries out the reaction di-trans,octa-cis-undecaprenyl diphosphate + H2O = di-trans,octa-cis-undecaprenyl phosphate + phosphate + H(+). In terms of biological role, catalyzes the dephosphorylation of undecaprenyl diphosphate (UPP). Confers resistance to bacitracin. The protein is Undecaprenyl-diphosphatase 1 of Bacillus cereus (strain ATCC 10987 / NRS 248).